The following is a 133-amino-acid chain: Large ribosomal subunit protein uL22 (133 aa).

This sequence belongs to the universal ribosomal protein uL22 family. In terms of assembly, part of the 50S ribosomal subunit.

This protein binds specifically to 23S rRNA; its binding is stimulated by other ribosomal proteins, e.g. L4, L17, and L20. It is important during the early stages of 50S assembly. It makes multiple contacts with different domains of the 23S rRNA in the assembled 50S subunit and ribosome. Its function is as follows. The globular domain of the protein is located near the polypeptide exit tunnel on the outside of the subunit, while an extended beta-hairpin is found that lines the wall of the exit tunnel in the center of the 70S ribosome. The protein is Large ribosomal subunit protein uL22 of Granulibacter bethesdensis (strain ATCC BAA-1260 / CGDNIH1).